We begin with the raw amino-acid sequence, 178 residues long: CASP-like protein 4D1 (178 aa).

The Cytoplasmic segment spans residues 1-14 (MAPPPPSPPSVTLR). Residues 15–35 (TVLLLLRVLTAAFLVITVVLI) form a helical membrane-spanning segment. Residues 36–60 (STNTVTLEVSSTSIKMRFNDVYAYR) lie on the Extracellular side of the membrane. Residues 61–81 (YMLSAAVIGLLYAVVQLFLTI) form a helical membrane-spanning segment. At 82 to 149 (SQFATGTTHP…KFFSKGYASA (68 aa)) the chain is on the cytoplasmic side. Residues 150–170 (SLLLFAFVSLAVLSVFSSLAL) form a helical membrane-spanning segment. The Extracellular segment spans residues 171 to 178 (SKRPIQVS).

This sequence belongs to the Casparian strip membrane proteins (CASP) family. In terms of assembly, homodimer and heterodimers.

The protein resides in the cell membrane. The sequence is that of CASP-like protein 4D1 from Arabidopsis lyrata subsp. lyrata (Lyre-leaved rock-cress).